A 213-amino-acid chain; its full sequence is Golgi SNAP receptor complex member 2 homolog memb-1 (213 aa).

Over 1–189 (MEALYQSTNF…QVIDRRVRED (189 aa)) the chain is Cytoplasmic. The chain crosses the membrane as a helical; Anchor for type IV membrane protein span at residues 190-210 (WILFVIGCIVCCIFMYAFYRF). Residues 211-213 (WRG) are Vesicular-facing.

It belongs to the GOSR2 family. As to quaternary structure, part of a unique SNARE complex.

Its subcellular location is the golgi apparatus. It localises to the cis-Golgi network membrane. The protein resides in the golgi apparatus membrane. It is found in the endoplasmic reticulum membrane. Involved in transport of proteins from the cis/medial-Golgi to the trans-Golgi network. In Caenorhabditis elegans, this protein is Golgi SNAP receptor complex member 2 homolog memb-1.